Consider the following 724-residue polypeptide: Phosphoribosylformylglycinamidine synthase subunit PurL (724 aa).

The active site involves H46. The ATP site is built by Y49 and K88. E90 is a binding site for Mg(2+). Residues 91-94 and R113 each bind substrate; that span reads SHNH. The active-site Proton acceptor is H92. D114 is a binding site for Mg(2+). Q237 contacts substrate. A Mg(2+)-binding site is contributed by D265. 309-311 is a substrate binding site; it reads ESQ. D489 and G526 together coordinate ATP. N527 serves as a coordination point for Mg(2+). Substrate is bound at residue S529.

It belongs to the FGAMS family. Monomer. Part of the FGAM synthase complex composed of 1 PurL, 1 PurQ and 2 PurS subunits.

The protein localises to the cytoplasm. The enzyme catalyses N(2)-formyl-N(1)-(5-phospho-beta-D-ribosyl)glycinamide + L-glutamine + ATP + H2O = 2-formamido-N(1)-(5-O-phospho-beta-D-ribosyl)acetamidine + L-glutamate + ADP + phosphate + H(+). The protein operates within purine metabolism; IMP biosynthesis via de novo pathway; 5-amino-1-(5-phospho-D-ribosyl)imidazole from N(2)-formyl-N(1)-(5-phospho-D-ribosyl)glycinamide: step 1/2. Part of the phosphoribosylformylglycinamidine synthase complex involved in the purines biosynthetic pathway. Catalyzes the ATP-dependent conversion of formylglycinamide ribonucleotide (FGAR) and glutamine to yield formylglycinamidine ribonucleotide (FGAM) and glutamate. The FGAM synthase complex is composed of three subunits. PurQ produces an ammonia molecule by converting glutamine to glutamate. PurL transfers the ammonia molecule to FGAR to form FGAM in an ATP-dependent manner. PurS interacts with PurQ and PurL and is thought to assist in the transfer of the ammonia molecule from PurQ to PurL. The sequence is that of Phosphoribosylformylglycinamidine synthase subunit PurL from Granulibacter bethesdensis (strain ATCC BAA-1260 / CGDNIH1).